The sequence spans 712 residues: Polyribonucleotide nucleotidyltransferase (712 aa).

Mg(2+) contacts are provided by D485 and D491. The KH domain occupies 552 to 615 (PRIHTIKINP…EAIRRIEAIT (64 aa)). Residues 621-689 (NRIYEGKVVR…RQGRVRLSIK (69 aa)) form the S1 motif domain.

The protein belongs to the polyribonucleotide nucleotidyltransferase family. In terms of assembly, component of the RNA degradosome, which is a multiprotein complex involved in RNA processing and mRNA degradation. The cofactor is Mg(2+).

The protein localises to the cytoplasm. The enzyme catalyses RNA(n+1) + phosphate = RNA(n) + a ribonucleoside 5'-diphosphate. Involved in mRNA degradation. Catalyzes the phosphorolysis of single-stranded polyribonucleotides processively in the 3'- to 5'-direction. This is Polyribonucleotide nucleotidyltransferase from Aeromonas hydrophila subsp. hydrophila (strain ATCC 7966 / DSM 30187 / BCRC 13018 / CCUG 14551 / JCM 1027 / KCTC 2358 / NCIMB 9240 / NCTC 8049).